The chain runs to 597 residues: Aspartate--tRNA(Asp/Asn) ligase (597 aa).

Glu182 serves as a coordination point for L-aspartate. Residues 206 to 209 (QLFK) form an aspartate region. Arg228 serves as a coordination point for L-aspartate. ATP is bound by residues 228-230 (RDE) and Gln237. His456 serves as a coordination point for L-aspartate. Glu490 lines the ATP pocket. Residue Arg497 coordinates L-aspartate. Residue 542–545 (GFDR) participates in ATP binding.

This sequence belongs to the class-II aminoacyl-tRNA synthetase family. Type 1 subfamily. As to quaternary structure, homodimer.

It is found in the cytoplasm. It catalyses the reaction tRNA(Asx) + L-aspartate + ATP = L-aspartyl-tRNA(Asx) + AMP + diphosphate. Its function is as follows. Aspartyl-tRNA synthetase with relaxed tRNA specificity since it is able to aspartylate not only its cognate tRNA(Asp) but also tRNA(Asn). Reaction proceeds in two steps: L-aspartate is first activated by ATP to form Asp-AMP and then transferred to the acceptor end of tRNA(Asp/Asn). The polypeptide is Aspartate--tRNA(Asp/Asn) ligase (Desulfatibacillum aliphaticivorans).